The chain runs to 232 residues: Anti-sigma-K factor RskA (232 aa).

The Cytoplasmic segment spans residues 1-90; it reads MTEHTDFELL…EVRRQSRWRT (90 aa). A helical transmembrane segment spans residues 91–111; it reads AAFASAAAIAVGLGAFGLGVL. Over 112–232 the chain is Extracellular; the sequence is TRPSPPPTVA…GTILAELPLG (121 aa).

This sequence belongs to the anti-sigma-K factor family.

The protein resides in the cell membrane. Functionally, an anti-sigma factor for extracytoplasmic function (ECF) sigma factor SigK. ECF sigma factors are held in an inactive form by an anti-sigma factor until released by regulated intramembrane proteolysis (RIP). RIP occurs when an extracytoplasmic signal triggers a concerted proteolytic cascade to transmit information and elicit cellular responses. The membrane-spanning regulatory substrate protein is first cut extracytoplasmically (site-1 protease, S1P), then within the membrane itself (site-2 protease, S2P, Rip1), while cytoplasmic proteases finish degrading the regulatory protein, liberating the sigma factor. This chain is Anti-sigma-K factor RskA (rskA), found in Mycobacterium tuberculosis (strain ATCC 25177 / H37Ra).